Consider the following 284-residue polypeptide: Acetylglutamate kinase (284 aa).

Residues 64 to 65 (GG), Arg86, and Asn181 contribute to the substrate site.

Belongs to the acetylglutamate kinase family. ArgB subfamily.

The protein localises to the cytoplasm. It carries out the reaction N-acetyl-L-glutamate + ATP = N-acetyl-L-glutamyl 5-phosphate + ADP. It functions in the pathway amino-acid biosynthesis; L-arginine biosynthesis; N(2)-acetyl-L-ornithine from L-glutamate: step 2/4. Catalyzes the ATP-dependent phosphorylation of N-acetyl-L-glutamate. The chain is Acetylglutamate kinase from Wolinella succinogenes (strain ATCC 29543 / DSM 1740 / CCUG 13145 / JCM 31913 / LMG 7466 / NCTC 11488 / FDC 602W) (Vibrio succinogenes).